We begin with the raw amino-acid sequence, 43 residues long: Potassium channel toxin gamma-KTx 4.12 (43 aa).

4 cysteine pairs are disulfide-bonded: C5–C23, C11–C34, C20–C39, and C24–C41.

Expressed by the venom gland.

Its subcellular location is the secreted. In terms of biological role, reversibly blocks Kv11/ERG potassium channels. Is less toxic than ergtoxin (AC Q86QT3). The sequence is that of Potassium channel toxin gamma-KTx 4.12 from Centruroides sculpturatus (Arizona bark scorpion).